Consider the following 286-residue polypeptide: Protein NipSnap homolog 2 (286 aa).

The N-terminal 23 residues, 1 to 23, are a transit peptide targeting the mitochondrion; the sequence is MAARVLRARGAAWAGGLLQRAAP.

The protein belongs to the NipSnap family. In terms of assembly, interacts with CALCOCO2/NDP52, NBR1, SQSTM1/p62, TAX1BP1 and WDFY3/ALFY. Interacts with ATG8 family proteins (MAP1LC3A, MAP1LC3B, MAP1LC3C, GABARAP, GABARAPL1 and GABARAPL2). Interacts with VDAC1. Widely expressed. Most abundant in heart and skeletal muscle.

It is found in the mitochondrion matrix. Its function is as follows. Protein involved in mitophagy by facilitating recruitment of the autophagy machinery required for clearance of damaged mitochondria. Accumulates on the mitochondria surface in response to mitochondrial depolarization and acts as a 'eat me' signal by recruiting proteins involved in selective autophagy, such as autophagy receptors (CALCOCO2/NDP52, NBR1, SQSTM1/p62, TAX1BP1 and WDFY3/ALFY) and ATG8 family proteins (MAP1LC3A, MAP1LC3B, MAP1LC3C, GABARAP, GABARAPL1 and GABARAPL2). In Homo sapiens (Human), this protein is Protein NipSnap homolog 2.